A 398-amino-acid polypeptide reads, in one-letter code: MTVSQVRRVAVIGAGISGVVSTAHLVAAGFEVTVFERNQQTGGICINRPCYKNLTTNVSTPLMRIKLRAWPENTPDFVHHSVVNEYIRDIALSTGVDERTIYGARVEHVYKDGGKWHVNWSVLDDNGSIDGLEERRLISTFDAVVVASGHYHSPHIPDIPGLSEVKKRWPSRVIHSKRYRTPEVYRDENVLMIGGGVSSMDISRDLGPFAKMIFQSTRNGDADPPALMLPDNADANDTILVTNGTQVHNIHRDIFYIPDPTLAFVGIPYFNTTFTLFEFQAIAVTAVWSRTACLPSTTEMRREYLVKQKQTGGGRKFHSLKDKEKEYVRDLMAWINDGRNAHGLVPIEGHTAAWFEAMDKLWDEARAAMKERKEQQEKIIKRIPFSADCTSVELPHLN.

The first 22 residues, 1-22 (MTVSQVRRVAVIGAGISGVVST), serve as a signal peptide directing secretion. Residue 13 to 18 (GAGISG) coordinates FAD. N-linked (GlcNAc...) asparagine glycosylation is found at N53, N57, N119, and N126. 194–199 (GGGVSS) is a binding site for NADP(+). Residues N236, N243, and N271 are each glycosylated (N-linked (GlcNAc...) asparagine).

It belongs to the FMO family.

The protein operates within mycotoxin biosynthesis. Functionally, flavin-containing monooxygenase; part of the gene cluster that mediates the biosynthesis of the secondary metabolite ustiloxin B, an antimitotic tetrapeptide. First, ustA is processed by the subtilisin-like endoprotease Kex2 that is outside the ustiloxin B gene cluster, at the C-terminal side of Arg-Lys, after transfer to Golgi apparatus through the endoplasmic reticulum (ER). Cleavage by KEX2 generates 16 peptides YAIG-I to YAIG-XVI. To process the precursor peptide further, at least two peptidases are necessary to cleave the N-terminal and C-terminal sides of the Tyr-Ala-Ile-Gly core peptide which serves as backbone for the synthesis of ustiloxin B, through cyclization and modification of the tyrosine with a non-protein coding amino acid, norvaline. One of the two peptidases must be the serine peptidase ustP; and the other pepdidase is probably ustH. Macrocyclization of the core peptide derived from ustA requires the tyrosinase ustQ, as well as the homologous oxidases ustYa and ustYb, and leads to the production of the first cyclization product N-desmethylustiloxin F. For the formation of N-desmethylustiloxin F, three oxidation steps are required, hydroxylation at the benzylic position, hydroxylation at either the aromatic ring of Tyr or beta-position of Ile, and oxidative cyclization. UstQ may catalyze the oxidation of a phenol moiety, whereas the ustYa and ustYb are most likely responsible for the remaining two-step oxidations. N-desmethylustiloxin F is then methylated by ustM to yield ustiloxin F which in turn substrate of the cytochrome P450 monooxygenase ustC which catalyzes the formation of S-deoxyustiloxin H. The flavoprotein monooxygenases ustF1 and ustF2 then participate in the modification of the side chain of S-deoxyustiloxin H, leading to the synthesis of an oxime intermediate, via ustiloxin H. Finally, carboxylative dehydration performed by the cysteine desulfurase-like protein ustD yields ustiloxin B. This is Flavin-containing monooxygenase ustF1 from Aspergillus flavus (strain ATCC 200026 / FGSC A1120 / IAM 13836 / NRRL 3357 / JCM 12722 / SRRC 167).